A 1080-amino-acid chain; its full sequence is Presequence protease 1, chloroplastic/mitochondrial (1080 aa).

Residues 1-85 constitute a chloroplast and mitochondrion transit peptide; that stretch reads MLRTVSCLAS…GQFSRLSVRA (85 aa). Val-86 is subject to N-acetylvaline. Position 162 (His-162) interacts with Zn(2+). The active-site Proton acceptor is Glu-165. His-166 is a binding site for Zn(2+). Glu-240 is an active-site residue. Glu-262 provides a ligand contact to Zn(2+). Residues 571-612 are a coiled coil; that stretch reads EKATQEEVEEKNILEKVKAAMTEEDLAELARATEELKLKQET. Arg-705 is a Mg(2+) binding site.

Belongs to the peptidase M16 family. PreP subfamily. Homodimer. Zn(2+) serves as cofactor. It depends on Mg(2+) as a cofactor. As to expression, expressed only in siliques and flowers.

The protein resides in the plastid. Its subcellular location is the chloroplast stroma. The protein localises to the mitochondrion matrix. Its activity is regulated as follows. Inactive in the absence of MgCl(2) and CaCl(2) and full activation at 10 mM concentrations of either ion. Completely inhibited by the metal chelator orthophenanthroline, but not affected by phenylmethylsulfonyl fluoride (PMSF) or N-ethylmaleimide (NEM). In terms of biological role, ATP-independent protease that degrades both mitochondrial and chloroplastic transit peptides after their cleavage. Also degrades other unstructured peptides. Specific for peptides in the range of 10 to 65 residues. Shows a preference for cleavage after small polar residues and before basic residues, with a bias for positively charged amino acid residues. This Arabidopsis thaliana (Mouse-ear cress) protein is Presequence protease 1, chloroplastic/mitochondrial (PREP1).